The primary structure comprises 434 residues: V-type ATP synthase beta chain (434 aa).

This sequence belongs to the ATPase alpha/beta chains family.

Its function is as follows. Produces ATP from ADP in the presence of a proton gradient across the membrane. The V-type beta chain is a regulatory subunit. This Borrelia garinii subsp. bavariensis (strain ATCC BAA-2496 / DSM 23469 / PBi) (Borreliella bavariensis) protein is V-type ATP synthase beta chain.